The primary structure comprises 126 residues: Methylglyoxal synthase (126 aa).

The 126-residue stretch at 1–126 (MKALALIAHD…IAWIRKGTPQ (126 aa)) folds into the MGS-like domain. Substrate is bound by residues His-9, Lys-13, 35 to 38 (TGTT), and 55 to 56 (SG). Asp-61 acts as the Proton donor/acceptor in catalysis. Residue His-88 coordinates substrate.

It belongs to the methylglyoxal synthase family.

It catalyses the reaction dihydroxyacetone phosphate = methylglyoxal + phosphate. Functionally, catalyzes the formation of methylglyoxal from dihydroxyacetone phosphate. This Thermus thermophilus (strain ATCC BAA-163 / DSM 7039 / HB27) protein is Methylglyoxal synthase.